The following is a 192-amino-acid chain: Ion-translocating oxidoreductase complex subunit B (192 aa).

Positions 1-26 (MNAFWIAVAAVSLLGLAFGAILGYAS) are hydrophobic. The 4Fe-4S domain maps to 32–91 (EDDPVVEKIDEILPQSQCGQCGYPGCRPYAEAISCNGEKINRCAPGGEAVMLKIAELLNV). [4Fe-4S] cluster-binding residues include Cys-49, Cys-52, Cys-57, Cys-74, Cys-117, Cys-120, Cys-123, Cys-127, Cys-147, Cys-150, Cys-153, and Cys-157. 2 consecutive 4Fe-4S ferredoxin-type domains span residues 108–137 (MVAV…GATR) and 138–167 (AMHT…LQPV).

It belongs to the 4Fe4S bacterial-type ferredoxin family. RnfB subfamily. The complex is composed of six subunits: RsxA, RsxB, RsxC, RsxD, RsxE and RsxG. [4Fe-4S] cluster is required as a cofactor.

Its subcellular location is the cell inner membrane. Its function is as follows. Part of a membrane-bound complex that couples electron transfer with translocation of ions across the membrane. Required to maintain the reduced state of SoxR. The sequence is that of Ion-translocating oxidoreductase complex subunit B from Escherichia coli O6:H1 (strain CFT073 / ATCC 700928 / UPEC).